The sequence spans 177 residues: Large ribosomal subunit protein uL6 (177 aa).

Belongs to the universal ribosomal protein uL6 family. Part of the 50S ribosomal subunit.

Its function is as follows. This protein binds to the 23S rRNA, and is important in its secondary structure. It is located near the subunit interface in the base of the L7/L12 stalk, and near the tRNA binding site of the peptidyltransferase center. This Salmonella newport (strain SL254) protein is Large ribosomal subunit protein uL6.